The following is a 146-amino-acid chain: uncharacterized protein (146 aa).

The Toprim domain maps to E31–P119.

This is an uncharacterized protein from Bacillus subtilis (strain 168).